The following is a 327-amino-acid chain: Gamma-gliadin (327 aa).

The signal sequence occupies residues 1 to 19 (MKTLLILTILAMAITIGTA). Residues 42 to 81 (QPLSQQPQQTFPQPQQTFPHQPQQQVPQPQQPQQPFLQPQ) are compositionally biased toward low complexity. The interval 42–169 (QPLSQQPQQT…QPQQSFPQQQ (128 aa)) is disordered. 3 stretches are compositionally biased toward pro residues: residues 82 to 91 (QPFPQQPQQP), 100 to 109 (QPFPQQPQQP), and 118 to 127 (QPFPQQPQQP). Residues 128 to 169 (FPQTQQPQQPFPQLQQPQQPFPQPQQQLPQPQQPQQSFPQQQ) show a composition bias toward low complexity.

The protein belongs to the gliadin/glutenin family.

Its function is as follows. Gliadin is the major seed storage protein in wheat. This Triticum aestivum (Wheat) protein is Gamma-gliadin.